Here is an 880-residue protein sequence, read N- to C-terminus: Alanine--tRNA ligase (880 aa).

Zn(2+)-binding residues include His-558, His-562, Cys-663, and His-667.

This sequence belongs to the class-II aminoacyl-tRNA synthetase family. Requires Zn(2+) as cofactor.

It localises to the cytoplasm. It catalyses the reaction tRNA(Ala) + L-alanine + ATP = L-alanyl-tRNA(Ala) + AMP + diphosphate. Its function is as follows. Catalyzes the attachment of alanine to tRNA(Ala) in a two-step reaction: alanine is first activated by ATP to form Ala-AMP and then transferred to the acceptor end of tRNA(Ala). Also edits incorrectly charged Ser-tRNA(Ala) and Gly-tRNA(Ala) via its editing domain. The polypeptide is Alanine--tRNA ligase (Mycoplasmopsis agalactiae (strain NCTC 10123 / CIP 59.7 / PG2) (Mycoplasma agalactiae)).